Reading from the N-terminus, the 398-residue chain is Nucleotide-sugar uncharacterized transporter 2 (398 aa).

The next 10 membrane-spanning stretches (helical) occupy residues 54–74 (FCGP…IILA), 84–104 (FNFP…LLAF), 119–139 (TTPF…SGLA), 150–170 (FYQM…FVLF), 179–199 (VMAL…DLEF), 201–221 (LFGA…KILW), 242–262 (FTVF…VLLF), 271–291 (AILI…LALG), 299–319 (VVLG…IFGS), and 322–342 (GFIS…YTWL).

The protein belongs to the TPT transporter family. TPT (TC 2.A.7.9) subfamily.

Its subcellular location is the membrane. This is Nucleotide-sugar uncharacterized transporter 2 from Arabidopsis thaliana (Mouse-ear cress).